Consider the following 80-residue polypeptide: Serine palmitoyltransferase small subunit B (80 aa).

Over 1 to 11 (MDVKHIKDYLS) the chain is Cytoplasmic. Residues 12-29 (WLYYQYLLITCSYVLEPW) form a helical membrane-spanning segment. Residues 30 to 36 (EQSIFNT) are Lumenal-facing. Residues 37–57 (LLLTIIAMVIYSSYIFIPIHV) form a helical membrane-spanning segment. The Cytoplasmic portion of the chain corresponds to 58-80 (RLAVEFFSGIFGGQHESTVALMS).

This sequence belongs to the SPTSS family. SPTSSB subfamily. In terms of assembly, component of the serine palmitoyltransferase (SPT) complex, which is composed of SPTLC1, SPTLC2 or SPTLC3 and SPTSSA or SPTSSB. The heterodimer consisting of SPTLC1 and SPTLC2/SPTLC3 forms the catalytic core of the enzyme, while SPTSSA or SPTSSB subunits determine substrate specificity. SPT also interacts with ORMDL proteins, especially ORMDL3, which negatively regulate SPT activity in the presence of ceramides.

The protein resides in the endoplasmic reticulum membrane. It participates in lipid metabolism; sphingolipid metabolism. In terms of biological role, component of the serine palmitoyltransferase multisubunit enzyme (SPT) that catalyzes the initial and rate-limiting step in sphingolipid biosynthesis by condensing L-serine and activated acyl-CoA (most commonly palmitoyl-CoA) to form long-chain bases. The SPT complex is composed of SPTLC1, SPTLC2 or SPTLC3 and SPTSSA or SPTSSB. Within this complex, the heterodimer consisting of SPTLC1 and SPTLC2/SPTLC3 forms the catalytic core. Within the SPT complex, SPTSSB stimulates the catalytic activity and plays a role in substrate specificity. SPT complexes with this subunit showing a preference for longer acyl-CoAs. The SPTLC1-SPTLC2-SPTSSB complex shows a strong preference for C18-CoA substrate, while the SPTLC1-SPTLC3-SPTSSB isozyme displays an ability to use a broader range of acyl-CoAs, without apparent preference. The protein is Serine palmitoyltransferase small subunit B (sptssb) of Xenopus tropicalis (Western clawed frog).